A 440-amino-acid chain; its full sequence is tRNA modification GTPase MnmE (440 aa).

Arg23, Glu80, and Lys120 together coordinate (6S)-5-formyl-5,6,7,8-tetrahydrofolate. Residues 217–366 (GLKIVIAGEP…LLAMLQAHLP (150 aa)) form the TrmE-type G domain. Asn227 serves as a coordination point for K(+). GTP-binding positions include 227 to 232 (NAGKSS), 246 to 252 (TEIAGTT), and 271 to 274 (DTAG). Ser231 contributes to the Mg(2+) binding site. Residues Thr246, Ile248, and Thr251 each coordinate K(+). Thr252 lines the Mg(2+) pocket. Residue Lys440 coordinates (6S)-5-formyl-5,6,7,8-tetrahydrofolate.

This sequence belongs to the TRAFAC class TrmE-Era-EngA-EngB-Septin-like GTPase superfamily. TrmE GTPase family. Homodimer. Heterotetramer of two MnmE and two MnmG subunits. The cofactor is K(+).

Its subcellular location is the cytoplasm. In terms of biological role, exhibits a very high intrinsic GTPase hydrolysis rate. Involved in the addition of a carboxymethylaminomethyl (cmnm) group at the wobble position (U34) of certain tRNAs, forming tRNA-cmnm(5)s(2)U34. The polypeptide is tRNA modification GTPase MnmE (Sinorhizobium medicae (strain WSM419) (Ensifer medicae)).